We begin with the raw amino-acid sequence, 501 residues long: uncharacterized protein (501 aa).

The helical transmembrane segment at 26-46 (ILLLLLGLIVLVNIGINVATM) threads the bilayer. Disordered stretches follow at residues 316 to 384 (RGTE…VRRR) and 409 to 501 (EASH…EKLN). Low complexity predominate over residues 476–490 (RSSSLPPASTSTLRP).

The protein localises to the membrane. This is an uncharacterized protein from Homo sapiens (Human).